Here is a 509-residue protein sequence, read N- to C-terminus: ATP synthase subunit alpha (509 aa).

169-176 contacts ATP; it reads GDRQTGKT.

Belongs to the ATPase alpha/beta chains family. As to quaternary structure, F-type ATPases have 2 components, CF(1) - the catalytic core - and CF(0) - the membrane proton channel. CF(1) has five subunits: alpha(3), beta(3), gamma(1), delta(1), epsilon(1). CF(0) has three main subunits: a(1), b(2) and c(9-12). The alpha and beta chains form an alternating ring which encloses part of the gamma chain. CF(1) is attached to CF(0) by a central stalk formed by the gamma and epsilon chains, while a peripheral stalk is formed by the delta and b chains.

The protein resides in the cell inner membrane. It carries out the reaction ATP + H2O + 4 H(+)(in) = ADP + phosphate + 5 H(+)(out). Functionally, produces ATP from ADP in the presence of a proton gradient across the membrane. The alpha chain is a regulatory subunit. The chain is ATP synthase subunit alpha from Brucella abortus (strain S19).